Here is a 235-residue protein sequence, read N- to C-terminus: Small ribosomal subunit protein uS3 (235 aa).

Residues 39–107 (VRKFLNKELA…PAQINIAEVK (69 aa)) enclose the KH type-2 domain. Residues 215-235 (AQSEQQPADKPKKAPRGKGRK) form a disordered region.

This sequence belongs to the universal ribosomal protein uS3 family. Part of the 30S ribosomal subunit. Forms a tight complex with proteins S10 and S14.

In terms of biological role, binds the lower part of the 30S subunit head. Binds mRNA in the 70S ribosome, positioning it for translation. This chain is Small ribosomal subunit protein uS3, found in Haemophilus influenzae (strain PittEE).